A 492-amino-acid chain; its full sequence is Cytoplasmic dynein 1 light intermediate chain 2 (492 aa).

61–68 serves as a coordination point for ATP; sequence GEDGSGKT. Disordered regions lie at residues 188 to 207, 370 to 423, and 437 to 492; these read EEGC…GSDE, LAKQ…KNNA, and LSKK…ENEA. A phosphoserine mark is found at S194, S383, and S391. Over residues 370–383 the composition is skewed to polar residues; it reads LAKQPATPTRTSES. R397 is modified (omega-N-methylarginine). Polar residues predominate over residues 437-469; the sequence is LSKKTGSPGSPSAGGVQSTAKKSGQKTVLSNVQ. Position 441 is a phosphothreonine (T441). Phosphoserine occurs at positions 443 and 446. Over residues 471-480 the composition is skewed to basic and acidic residues; the sequence is ELDRMTRKPD. Polar residues predominate over residues 482–492; sequence MVTNSSTENEA.

It belongs to the dynein light intermediate chain family. In terms of assembly, homodimer. The cytoplasmic dynein 1 complex consists of two catalytic heavy chains (HCs) and a number of non-catalytic subunits presented by intermediate chains (ICs), light intermediate chains (LICs) and light chains (LCs); the composition seems to vary in respect to the IC, LIC and LC composition. The heavy chain homodimer serves as a scaffold for the probable homodimeric assembly of the respective non-catalytic subunits. The ICs and LICs bind directly to the HC dimer and the LCs assemble on the IC dimer. Interacts with DYNC1H1; DYNC1LI1 and DYNC1LI2 bind mutually exclusive to DYNC1H.

The protein localises to the cytoplasm. The protein resides in the cytoskeleton. Its function is as follows. Acts as one of several non-catalytic accessory components of the cytoplasmic dynein 1 complex that are thought to be involved in linking dynein to cargos and to adapter proteins that regulate dynein function. Cytoplasmic dynein 1 acts as a motor for the intracellular retrograde motility of vesicles and organelles along microtubules. May play a role in binding dynein to membranous organelles or chromosomes. The protein is Cytoplasmic dynein 1 light intermediate chain 2 (Dync1li2) of Mus musculus (Mouse).